A 142-amino-acid polypeptide reads, in one-letter code: MAKKVQAYVKLQVAAGMANPSPPVGPALGQQGVNIMEFCKAFNAKTDSLEKGLPIPVVITVYADRSFTFVTKTPPAAVLLKKAAGIKSGSGKPNKDKVGKISRAQLQEIAQTKAADMTGADIEAMTRSIEGTARSMGLVVED.

It belongs to the universal ribosomal protein uL11 family. Part of the ribosomal stalk of the 50S ribosomal subunit. Interacts with L10 and the large rRNA to form the base of the stalk. L10 forms an elongated spine to which L12 dimers bind in a sequential fashion forming a multimeric L10(L12)X complex. Post-translationally, one or more lysine residues are methylated.

Functionally, forms part of the ribosomal stalk which helps the ribosome interact with GTP-bound translation factors. The sequence is that of Large ribosomal subunit protein uL11 from Klebsiella pneumoniae subsp. pneumoniae (strain ATCC 700721 / MGH 78578).